The chain runs to 361 residues: Ribosomal RNA small subunit methyltransferase H (361 aa).

S-adenosyl-L-methionine-binding positions include 54–56 (GGH), Asp-74, Tyr-101, Asp-122, and Gln-129. Residues 318 to 361 (ARNSRASSAKLRAAQRLAEGQAPRPRRRNKYAPEGRDEPEGGAA) are disordered. Residues 348–361 (YAPEGRDEPEGGAA) are compositionally biased toward basic and acidic residues.

The protein belongs to the methyltransferase superfamily. RsmH family.

It localises to the cytoplasm. The enzyme catalyses cytidine(1402) in 16S rRNA + S-adenosyl-L-methionine = N(4)-methylcytidine(1402) in 16S rRNA + S-adenosyl-L-homocysteine + H(+). Functionally, specifically methylates the N4 position of cytidine in position 1402 (C1402) of 16S rRNA. The polypeptide is Ribosomal RNA small subunit methyltransferase H (Nitratidesulfovibrio vulgaris (strain DSM 19637 / Miyazaki F) (Desulfovibrio vulgaris)).